The sequence spans 535 residues: Arylsulfatase K (535 aa).

The signal sequence occupies residues methionine 1 to cysteine 21. Ca(2+) contacts are provided by aspartate 41 and cysteine 81. The active-site Nucleophile is cysteine 81. Cysteine 81 is modified (3-oxoalanine (Cys)). Residue lysine 129 coordinates substrate. N-linked (GlcNAc...) asparagine glycosylation is present at asparagine 194. Histidine 252 contacts substrate. An N-linked (GlcNAc...) asparagine glycan is attached at asparagine 263. Positions 314 and 315 each coordinate Ca(2+). Asparagine 376, asparagine 414, and asparagine 499 each carry an N-linked (GlcNAc...) asparagine glycan.

It belongs to the sulfatase family. The cofactor is Ca(2+). In terms of processing, the conversion to 3-oxoalanine (also known as C-formylglycine, FGly), of a serine or cysteine residue in prokaryotes and of a cysteine residue in eukaryotes, is critical for catalytic activity.

The protein localises to the secreted. It is found in the lysosome. The enzyme catalyses an aryl sulfate + H2O = a phenol + sulfate + H(+). The catalysed reaction is Hydrolysis of the 2-sulfate groups of the 2-O-sulfo-D-glucuronate residues of chondroitin sulfate, heparin and heparitin sulfate.. In terms of biological role, catalyzes the hydrolysis of pseudosubstrates such as p-nitrocatechol sulfate and p-nitrophenyl sulfate. Catalyzes the hydrolysis of the 2-sulfate groups of the 2-O-sulfo-D-glucuronate residues of chondroitin sulfate, heparin and heparitin sulfate. Acts selectively on 2-sulfoglucuronate and lacks activity against 2-sulfoiduronate. The polypeptide is Arylsulfatase K (ARSK) (Gallus gallus (Chicken)).